A 426-amino-acid polypeptide reads, in one-letter code: Bone morphogenetic protein 7 (426 aa).

The N-terminal stretch at 1-22 is a signal peptide; it reads MNALTVKRRLPVLLFLFHISLS. Residues 23–282 constitute a propeptide that is removed on maturation; sequence SISSNTILEN…TSDIHLRSVR (260 aa). N-linked (GlcNAc...) asparagine glycans are attached at residues N177, N307, and N367. Disulfide bonds link C325/C391, C354/C423, and C358/C425.

Belongs to the TGF-beta family. In terms of assembly, homodimer; disulfide-linked. Interacts with twsg1.

It localises to the secreted. Functionally, growth factor of the TGF-beta superfamily that plays important role in various biological processes, including embryogenesis, hematopoiesis, neurogenesis and skeletal morphogenesis. Initiates the canonical BMP signaling cascade by associating with type I receptor ACVR1 and type II receptor ACVR2A. Once all three components are bound together in a complex at the cell surface, ACVR2A phosphorylates and activates ACVR1. In turn, ACVR1 propagates signal by phosphorylating SMAD1/5/8 that travel to the nucleus and act as activators and repressors of transcription of target genes. The protein is Bone morphogenetic protein 7 (bmp7) of Xenopus laevis (African clawed frog).